Here is a 430-residue protein sequence, read N- to C-terminus: Adenylosuccinate synthetase (430 aa).

Residues 12-18 (GDEGKGK) and 40-42 (GHT) contribute to the GTP site. Catalysis depends on D13, which acts as the Proton acceptor. Mg(2+) is bound by residues D13 and G40. IMP is bound by residues 13–16 (DEGK), 38–41 (NAGH), T130, R144, Q224, T239, and R303. Residue H41 is the Proton donor of the active site. 299 to 305 (TVTGRKR) is a substrate binding site. GTP is bound by residues R305, 331–333 (KLD), and 413–415 (STS).

The protein belongs to the adenylosuccinate synthetase family. Homodimer. The cofactor is Mg(2+).

The protein localises to the cytoplasm. The catalysed reaction is IMP + L-aspartate + GTP = N(6)-(1,2-dicarboxyethyl)-AMP + GDP + phosphate + 2 H(+). The protein operates within purine metabolism; AMP biosynthesis via de novo pathway; AMP from IMP: step 1/2. Functionally, plays an important role in the de novo pathway of purine nucleotide biosynthesis. Catalyzes the first committed step in the biosynthesis of AMP from IMP. In Cereibacter sphaeroides (strain KD131 / KCTC 12085) (Rhodobacter sphaeroides), this protein is Adenylosuccinate synthetase.